The primary structure comprises 126 residues: 3-aminoacrylate deaminase RutC (126 aa).

It belongs to the RutC family.

The catalysed reaction is (Z)-3-aminoacrylate + H2O + H(+) = 3-oxopropanoate + NH4(+). In terms of biological role, involved in pyrimidine catabolism. Catalyzes the deamination of 3-aminoacrylate to malonic semialdehyde, a reaction that can also occur spontaneously. RutC may facilitate the reaction and modulate the metabolic fitness, rather than catalyzing essential functions. The sequence is that of 3-aminoacrylate deaminase RutC from Acinetobacter baylyi (strain ATCC 33305 / BD413 / ADP1).